A 142-amino-acid polypeptide reads, in one-letter code: Large ribosomal subunit protein uL22c (142 aa).

Belongs to the universal ribosomal protein uL22 family. Part of the 50S ribosomal subunit.

Its subcellular location is the plastid. It localises to the chloroplast. In terms of biological role, this protein binds specifically to 23S rRNA. Functionally, the globular domain of the protein is located near the polypeptide exit tunnel on the outside of the subunit, while an extended beta-hairpin is found that lines the wall of the exit tunnel in the center of the 70S ribosome. In Pinus thunbergii (Japanese black pine), this protein is Large ribosomal subunit protein uL22c (rpl22).